The following is a 90-amino-acid chain: Small ribosomal subunit protein uS19 (90 aa).

Belongs to the universal ribosomal protein uS19 family.

Its function is as follows. Protein S19 forms a complex with S13 that binds strongly to the 16S ribosomal RNA. This Clostridium beijerinckii (strain ATCC 51743 / NCIMB 8052) (Clostridium acetobutylicum) protein is Small ribosomal subunit protein uS19.